The sequence spans 353 residues: MSQLITKAALRVLLVCGRGNCNMFVSSVSSTSVMKSPYEITAPMRIHDWCGGFGDFKIGSKHVQGNFNLRWMGMSSASAMEKKDENLTVKKGQNGGGSVAVPSYWGIETAKMKITRKDGSDWPWNCFMPWETYQANLSIDLKKHHVPKNIADKVAYRIVKLLRIPTDIFFQRRYGCRAMMLETVAAVPGMVGGMLLHLKSIRKFEHSGGWIKALLEEAENERMHLMTMMELVKPKWYERLLVMLVQGIFFNSFFVCYVISPRLAHRVVGYLEEEAIHSYTEFLKDIDNGKIENVAAPAIAIDYWRLPKDATLKDVVTVIRADEAHHRDVNHFASDIRNQGKELREAAAPIGYH.

The N-terminal 21 residues, 1–21 (MSQLITKAALRVLLVCGRGNC), are a transit peptide targeting the mitochondrion. A helical transmembrane segment spans residues 178 to 198 (AMMLETVAAVPGMVGGMLLHL). Positions 182, 221, and 224 each coordinate Fe cation. Residues 240–260 (LLVMLVQGIFFNSFFVCYVIS) traverse the membrane as a helical segment. The Fe cation site is built by glutamate 272, glutamate 323, and histidine 326.

This sequence belongs to the alternative oxidase family. As to quaternary structure, homodimer; disulfide-linked. Requires Fe cation as cofactor. Maximally expressed in dry seeds. Detected in roots, stems and leaves.

It localises to the mitochondrion inner membrane. It catalyses the reaction 2 a ubiquinol + O2 = 2 a ubiquinone + 2 H2O. Functionally, catalyzes the cyanide-resistant oxidation of ubiquinol and the reduction of molecular oxygen to water, but does not translocate protons and consequently is not linked to oxidative phosphorylation. May increase respiration when the cytochrome respiratory pathway is restricted, or in response to low temperatures. This chain is Ubiquinol oxidase 2, mitochondrial (AOX2), found in Arabidopsis thaliana (Mouse-ear cress).